An 874-amino-acid chain; its full sequence is Mannuronan C5-epimerase AlgE6 (874 aa).

8 PbH1 repeats span residues 133–155 (DRNVTIERVEVREMSGYGFDPHE), 157–179 (TINLVLRDSVAHHNGLDGFVADY), 180–202 (QIGGTFENNVAYANDRHGFNIVT), 204–226 (TNDFVMRNNVAYGNGGNGLVVQR), 234–256 (PENILIDGGSYYDNGLEGVLVKM), 257–279 (SNNVTVQNADIHGNGSSGVRVYG), 280–302 (AQGVQILGNQIHDNAKTAVAPEV), and 320–351 (TLNTRVEGNTITGSANSTYGVQERNDGTDFSS). Hemolysin-type calcium-binding repeat units follow at residues 383-394 (GTDGNDVLIGSD), 401-417 (GGAGDDRLDGGAGDDLL), 419-435 (GGAGRDRLTGGLGADTF), 562-578 (GGGGADQLYGYGGGDLL), 580-596 (GGAGRDRLTGGEGADTF), 723-739 (GGGGADQLYGYAGNDLL), and 741-757 (GGAGRDKLSGGEGADTF). The segment at 401-420 (GGAGDDRLDGGAGDDLLDGG) is disordered.

It belongs to the D-mannuronate C5-epimerase family. It depends on Ca(2+) as a cofactor.

The protein resides in the secreted. The catalysed reaction is [(1-&gt;4)-beta-D-mannuronosyl](n) = [alginate](n). It functions in the pathway glycan biosynthesis; alginate biosynthesis. Its activity is regulated as follows. Inhibited by zinc. In terms of biological role, converts beta-D-mannuronic acid (M) to alpha-L-guluronic acid (G), producing a polymer with gel-forming capacity, required for the formation of the cyst coat. The sequence is that of Mannuronan C5-epimerase AlgE6 from Azotobacter vinelandii.